Consider the following 334-residue polypeptide: tRNA methyltransferase 10 homolog A (334 aa).

Disordered stretches follow at residues Met-1 to Arg-101 and Pro-290 to Ser-334. Residues His-26 to Pro-40 show a composition bias toward polar residues. Residues Lys-62–Ile-94 adopt a coiled-coil conformation. The segment covering Arg-71 to Leu-84 has biased composition (basic residues). A compositionally biased stretch (basic and acidic residues) spans Glu-85–Ser-98. The SAM-dependent MTase TRM10-type domain occupies Ser-98–Ile-289. Over residues Gln-305 to Ile-317 the composition is skewed to acidic residues.

This sequence belongs to the class IV-like SAM-binding methyltransferase superfamily. TRM10 family.

The catalysed reaction is guanosine(9) in tRNA + S-adenosyl-L-methionine = N(1)-methylguanosine(9) in tRNA + S-adenosyl-L-homocysteine + H(+). S-adenosyl-L-methionine-dependent guanine N(1)-methyltransferase that catalyzes the formation of N(1)-methylguanine at position 9 (m1G9) in tRNAs. Probably not able to catalyze formation of N(1)-methyladenine at position 9 (m1A9) in tRNAs. The chain is tRNA methyltransferase 10 homolog A (trmt10a) from Xenopus tropicalis (Western clawed frog).